Reading from the N-terminus, the 124-residue chain is Small ribosomal subunit protein uS12 (124 aa).

A 3-methylthioaspartic acid modification is found at D89.

This sequence belongs to the universal ribosomal protein uS12 family. As to quaternary structure, part of the 30S ribosomal subunit. Contacts proteins S8 and S17. May interact with IF1 in the 30S initiation complex.

With S4 and S5 plays an important role in translational accuracy. In terms of biological role, interacts with and stabilizes bases of the 16S rRNA that are involved in tRNA selection in the A site and with the mRNA backbone. Located at the interface of the 30S and 50S subunits, it traverses the body of the 30S subunit contacting proteins on the other side and probably holding the rRNA structure together. The combined cluster of proteins S8, S12 and S17 appears to hold together the shoulder and platform of the 30S subunit. This is Small ribosomal subunit protein uS12 from Klebsiella pneumoniae (strain 342).